A 152-amino-acid polypeptide reads, in one-letter code: Methylglyoxal synthase (152 aa).

Positions 6 to 152 (RTLATEKNIA…YEGYLKERLK (147 aa)) constitute an MGS-like domain. Residues His19, Lys23, 45-48 (TGTT), and 65-66 (SG) each bind substrate. Asp71 serves as the catalytic Proton donor/acceptor. Position 98 (His98) interacts with substrate.

This sequence belongs to the methylglyoxal synthase family.

It catalyses the reaction dihydroxyacetone phosphate = methylglyoxal + phosphate. Its function is as follows. Catalyzes the formation of methylglyoxal from dihydroxyacetone phosphate. The sequence is that of Methylglyoxal synthase from Proteus mirabilis (strain HI4320).